The chain runs to 110 residues: BolA-like protein 3 (110 aa).

This sequence belongs to the BolA/IbaG family. Interacts with NFU1.

Its subcellular location is the mitochondrion. Its function is as follows. Acts as a mitochondrial iron-sulfur (Fe-S) cluster assembly factor that facilitates (Fe-S) cluster insertion into a subset of mitochondrial proteins. Probably acts together with NFU1. The polypeptide is BolA-like protein 3 (Bola3) (Mus musculus (Mouse)).